An 89-amino-acid chain; its full sequence is Small ribosomal subunit protein bS20 (89 aa).

Belongs to the bacterial ribosomal protein bS20 family.

Binds directly to 16S ribosomal RNA. The sequence is that of Small ribosomal subunit protein bS20 from Helicobacter pylori (strain P12).